The sequence spans 593 residues: Proline--tRNA ligase (593 aa).

The protein belongs to the class-II aminoacyl-tRNA synthetase family. ProS type 1 subfamily. In terms of assembly, homodimer.

It is found in the cytoplasm. The catalysed reaction is tRNA(Pro) + L-proline + ATP = L-prolyl-tRNA(Pro) + AMP + diphosphate. In terms of biological role, catalyzes the attachment of proline to tRNA(Pro) in a two-step reaction: proline is first activated by ATP to form Pro-AMP and then transferred to the acceptor end of tRNA(Pro). As ProRS can inadvertently accommodate and process non-cognate amino acids such as alanine and cysteine, to avoid such errors it has two additional distinct editing activities against alanine. One activity is designated as 'pretransfer' editing and involves the tRNA(Pro)-independent hydrolysis of activated Ala-AMP. The other activity is designated 'posttransfer' editing and involves deacylation of mischarged Ala-tRNA(Pro). The misacylated Cys-tRNA(Pro) is not edited by ProRS. The polypeptide is Proline--tRNA ligase (Synechococcus sp. (strain CC9605)).